The chain runs to 156 residues: Small ribosomal subunit protein uS7 (156 aa).

This sequence belongs to the universal ribosomal protein uS7 family. Part of the 30S ribosomal subunit. Contacts proteins S9 and S11.

Its function is as follows. One of the primary rRNA binding proteins, it binds directly to 16S rRNA where it nucleates assembly of the head domain of the 30S subunit. Is located at the subunit interface close to the decoding center, probably blocks exit of the E-site tRNA. This Carboxydothermus hydrogenoformans (strain ATCC BAA-161 / DSM 6008 / Z-2901) protein is Small ribosomal subunit protein uS7.